The primary structure comprises 338 residues: 1-aminocyclopropane-1-carboxylate deaminase (338 aa).

K51 bears the N6-(pyridoxal phosphate)lysine mark. S78 (nucleophile) is an active-site residue.

It belongs to the ACC deaminase/D-cysteine desulfhydrase family. As to quaternary structure, homotrimer. Pyridoxal 5'-phosphate is required as a cofactor.

It catalyses the reaction 1-aminocyclopropane-1-carboxylate + H2O = 2-oxobutanoate + NH4(+). Its function is as follows. Catalyzes a cyclopropane ring-opening reaction, the irreversible conversion of 1-aminocyclopropane-1-carboxylate (ACC) to ammonia and alpha-ketobutyrate. Allows growth on ACC as a nitrogen source. The sequence is that of 1-aminocyclopropane-1-carboxylate deaminase from Pseudomonas putida (Arthrobacter siderocapsulatus).